A 783-amino-acid chain; its full sequence is Probable potassium transporter 2 (783 aa).

The Cytoplasmic segment spans residues 1–21 (MDAEAGVGGADQLPWRQHYRN). A helical membrane pass occupies residues 22-42 (LLLLAYQSFGVVYGDLSTSPL). The Extracellular portion of the chain corresponds to 43 to 61 (YVYKSTFSGRLRRYQDEQT). The helical transmembrane segment at 62–82 (VFGVLSLIFWTFTLIPLLKYV) threads the bilayer. At 83–152 (TIVLSADDNG…FMEKHKNART (70 aa)) the chain is on the cytoplasmic side. The chain crosses the membrane as a helical span at residues 153–173 (VLLLIVLCGASMMIGDGILTP). Residues 174–189 (AISVLSSMSGLKVRAT) lie on the Extracellular side of the membrane. Residues 190-210 (GLHDRSVVLLSCIVLVGLFAL) traverse the membrane as a helical segment. Residues 211–217 (QHRGTQK) are Cytoplasmic-facing. A helical membrane pass occupies residues 218-238 (VAFMFAPIVVIWLFCIGGIGL). Residues 239 to 268 (YNIIHWNPRIYQALSPYYIVKFFRTTGKDG) are Extracellular-facing. Residues 269 to 289 (WIALGGILLSMTGCEAMFADL) traverse the membrane as a helical segment. Residues 290 to 298 (GHFTSASVR) lie on the Cytoplasmic side of the membrane. The chain crosses the membrane as a helical span at residues 299-319 (LAFITIIYPCLILQYMGQAAF). Residues 320 to 338 (LSKNILDMPTGFYDSIPGP) lie on the Extracellular side of the membrane. The chain crosses the membrane as a helical span at residues 339 to 359 (IFWPVFVVATLAAVVGSQAVI). Over 360 to 390 (SATFSIVKQCHSLGCFPRVKVVHTSRWIYGQ) the chain is Cytoplasmic. The chain crosses the membrane as a helical span at residues 391–411 (IYIPEINWILMVLCVAVTVAF). Residues 412–422 (RDITLIGNAYG) are Extracellular-facing. A helical transmembrane segment spans residues 423-443 (VACMTVMFVTTFLMALIMIFV). At 444–447 (WQKN) the chain is on the cytoplasmic side. Residues 448–468 (IIFALSFFLLFGSVEVVYLSS) form a helical membrane-spanning segment. Residues 469 to 475 (SLMKVTQ) are Extracellular-facing. The helical transmembrane segment at 476–496 (GGWVPLVLALIFMSVMYIWHY) threads the bilayer. Topologically, residues 497–783 (GTRKKYQYDL…LIEVGMAYQV (287 aa)) are cytoplasmic. Residues 662–691 (DLADSMTMRSTKSESLRSLQSSYEQESPNV) form a disordered region. Residues 677–691 (LRSLQSSYEQESPNV) are compositionally biased toward polar residues.

Belongs to the HAK/KUP transporter (TC 2.A.72.3) family.

It is found in the cell membrane. It carries out the reaction K(+)(in) = K(+)(out). The catalysed reaction is Na(+)(in) = Na(+)(out). Its function is as follows. High-affinity potassium transporter. Can transport sodium under high sodium and low potassium concentrations in the extracellular environment. This Oryza sativa subsp. japonica (Rice) protein is Probable potassium transporter 2 (HAK2).